We begin with the raw amino-acid sequence, 86 residues long: MQKQTLLNIGFGNFVVSSRVITIVNPSSSPMRRLREDARQEGRLVDATQGRKTRSIIVTDSNHVILSAIQAETIGHRYTSEEVEND.

The protein belongs to the RemA family.

This is Putative regulatory protein Desal_2819 from Maridesulfovibrio salexigens (strain ATCC 14822 / DSM 2638 / NCIMB 8403 / VKM B-1763) (Desulfovibrio salexigens).